Reading from the N-terminus, the 802-residue chain is Lon protease (802 aa).

The Lon N-terminal domain occupies 17-211; it reads SIVMPLFEVV…LFLHILTKHK (195 aa). Residue 363–370 participates in ATP binding; it reads GPPGTGKT. Residues 600-780 form the Lon proteolytic domain; sequence ENVPGVVTGL…EEVLREALDI (181 aa). Active-site residues include S686 and K729.

The protein belongs to the peptidase S16 family. In terms of assembly, homohexamer. Organized in a ring with a central cavity.

The protein resides in the cytoplasm. It catalyses the reaction Hydrolysis of proteins in presence of ATP.. Functionally, ATP-dependent serine protease that mediates the selective degradation of mutant and abnormal proteins as well as certain short-lived regulatory proteins. Required for cellular homeostasis and for survival from DNA damage and developmental changes induced by stress. Degrades polypeptides processively to yield small peptide fragments that are 5 to 10 amino acids long. Binds to DNA in a double-stranded, site-specific manner. This Methanosarcina barkeri (strain Fusaro / DSM 804) protein is Lon protease.